A 457-amino-acid polypeptide reads, in one-letter code: MQKYISEARLLLALAIPVILAQIAQTAMGFVDTVMAGGYSATDMAAVAIGTSIWLPAILFGHGLLLALTPVIAQLNGSGRRERIAHQVRQGFWLAGFVSVLIMLVLWNAGYIIRSMENIDPALADKAVGYLRALLWGAPGYLFFQVARNQCEGLAKTKPGMVMGFIGLLVNIPVNYIFIYGHFGMPELSGVGCGVATAAVYWAMFLAMVSYIKRARSMRDIRNEKGTAKPDPAVMKRLIQLGLPIALALFFEVTLFAVVALLVSPLGIVDVAGHQIALNFSSLMFVLPMSLAAAVTIRVGYRLGQGSTLDAQTAARTGLMVGVCMATLTAIFTVSLREQIALLYNDNPEVVTLAAHLMLLAAVYQISDSIQVIGSGILRGYKDTRSIFYITFTAYWVLGLPSGYILALTDLVVEPMGPAGFWIGFIIGLTSAAIMMMLRMRFLQRLPSAIILQRASR.

Residues 1 to 10 (MQKYISEARL) are Cytoplasmic-facing. Residues 11-31 (LLALAIPVILAQIAQTAMGFV) form a helical membrane-spanning segment. Topologically, residues 32 to 52 (DTVMAGGYSATDMAAVAIGTS) are periplasmic. The chain crosses the membrane as a helical span at residues 53-73 (IWLPAILFGHGLLLALTPVIA). Topologically, residues 74–92 (QLNGSGRRERIAHQVRQGF) are cytoplasmic. The chain crosses the membrane as a helical span at residues 93 to 113 (WLAGFVSVLIMLVLWNAGYII). The Periplasmic segment spans residues 114–126 (RSMENIDPALADK). A helical transmembrane segment spans residues 127-147 (AVGYLRALLWGAPGYLFFQVA). At 148-159 (RNQCEGLAKTKP) the chain is on the cytoplasmic side. The chain crosses the membrane as a helical span at residues 160-180 (GMVMGFIGLLVNIPVNYIFIY). The Periplasmic segment spans residues 181–191 (GHFGMPELSGV). The chain crosses the membrane as a helical span at residues 192 to 212 (GCGVATAAVYWAMFLAMVSYI). The Cytoplasmic portion of the chain corresponds to 213 to 242 (KRARSMRDIRNEKGTAKPDPAVMKRLIQLG). Residues 243–263 (LPIALALFFEVTLFAVVALLV) form a helical membrane-spanning segment. The Periplasmic portion of the chain corresponds to 264 to 275 (SPLGIVDVAGHQ). A helical membrane pass occupies residues 276–296 (IALNFSSLMFVLPMSLAAAVT). At 297-313 (IRVGYRLGQGSTLDAQT) the chain is on the cytoplasmic side. The helical transmembrane segment at 314–334 (AARTGLMVGVCMATLTAIFTV) threads the bilayer. The Periplasmic segment spans residues 335–349 (SLREQIALLYNDNPE). The helical transmembrane segment at 350-370 (VVTLAAHLMLLAAVYQISDSI) threads the bilayer. Over 371–386 (QVIGSGILRGYKDTRS) the chain is Cytoplasmic. Residues 387–407 (IFYITFTAYWVLGLPSGYILA) form a helical membrane-spanning segment. Over 408–417 (LTDLVVEPMG) the chain is Periplasmic. The chain crosses the membrane as a helical span at residues 418–438 (PAGFWIGFIIGLTSAAIMMML). The Cytoplasmic segment spans residues 439 to 457 (RMRFLQRLPSAIILQRASR).

This sequence belongs to the multi antimicrobial extrusion (MATE) (TC 2.A.66.1) family. MdtK subfamily.

Its subcellular location is the cell inner membrane. Its function is as follows. Multidrug efflux pump that functions probably as a Na(+)/drug antiporter. This chain is Multidrug resistance protein MdtK, found in Shigella dysenteriae serotype 1 (strain Sd197).